Here is a 426-residue protein sequence, read N- to C-terminus: Crinkler effector protein 4 (426 aa).

An LQLFLAK domain region spans residues V20–K57. The interval D59–V107 is DWL domain. An HVLVXXP motif motif is present at residues H108–P114. An effector domain region spans residues E115 to S426.

Belongs to the Crinkler effector family.

Its subcellular location is the secreted. The protein localises to the host nucleus. Secreted effector that is critical to pathogenesis by suppressing plant immune responsess. Promotes Phytophthora infection by suppressing the H(2)O(2) accumulation and callose deposition. May induce cell death by regulating expression of cell death-related genes. This chain is Crinkler effector protein 4, found in Phytophthora capsici.